The following is a 237-amino-acid chain: Ubiquinone biosynthesis O-methyltransferase (237 aa).

S-adenosyl-L-methionine contacts are provided by arginine 38, glycine 57, aspartate 78, and methionine 122.

The protein belongs to the methyltransferase superfamily. UbiG/COQ3 family.

The enzyme catalyses a 3-demethylubiquinol + S-adenosyl-L-methionine = a ubiquinol + S-adenosyl-L-homocysteine + H(+). The catalysed reaction is a 3-(all-trans-polyprenyl)benzene-1,2-diol + S-adenosyl-L-methionine = a 2-methoxy-6-(all-trans-polyprenyl)phenol + S-adenosyl-L-homocysteine + H(+). It participates in cofactor biosynthesis; ubiquinone biosynthesis. Its function is as follows. O-methyltransferase that catalyzes the 2 O-methylation steps in the ubiquinone biosynthetic pathway. The polypeptide is Ubiquinone biosynthesis O-methyltransferase (Methylococcus capsulatus (strain ATCC 33009 / NCIMB 11132 / Bath)).